The primary structure comprises 239 residues: Aspartate/glutamate leucyltransferase (239 aa).

It belongs to the R-transferase family. Bpt subfamily.

The protein resides in the cytoplasm. The enzyme catalyses N-terminal L-glutamyl-[protein] + L-leucyl-tRNA(Leu) = N-terminal L-leucyl-L-glutamyl-[protein] + tRNA(Leu) + H(+). The catalysed reaction is N-terminal L-aspartyl-[protein] + L-leucyl-tRNA(Leu) = N-terminal L-leucyl-L-aspartyl-[protein] + tRNA(Leu) + H(+). Functions in the N-end rule pathway of protein degradation where it conjugates Leu from its aminoacyl-tRNA to the N-termini of proteins containing an N-terminal aspartate or glutamate. The sequence is that of Aspartate/glutamate leucyltransferase from Campylobacter jejuni subsp. jejuni serotype O:23/36 (strain 81-176).